The sequence spans 92 residues: Late cornified envelope protein 3E (92 aa).

Over residues 1–10 (MSCQQNQKQC) the composition is skewed to low complexity. Disordered stretches follow at residues 1-22 (MSCQQNQKQCQPPPKCPSPKCP) and 64-92 (RRQRSNSCDRGSGQQGGGSGCCHGSGGCC). The span at 11 to 22 (QPPPKCPSPKCP) shows a compositional bias: pro residues. Residues 76–92 (GQQGGGSGCCHGSGGCC) are compositionally biased toward gly residues.

Belongs to the LCE family. In terms of assembly, interacts with CYSRT1. In terms of tissue distribution, skin-specific. Expression was readily detected in adult trunk skin, adult arm skin, fetal skin, penal skin, vulva, esophagus and tongue. Not expressed in the cervix, rectum, lung, colon, or placenta.

Precursors of the cornified envelope of the stratum corneum. The chain is Late cornified envelope protein 3E (LCE3E) from Homo sapiens (Human).